The chain runs to 387 residues: Phosphoglycerate kinase (387 aa).

Substrate contacts are provided by residues 21-23 (DLN), Arg36, 59-62 (HLGR), Arg113, and Arg146. Residues Lys197, Glu314, and 340-343 (GGDT) each bind ATP.

Belongs to the phosphoglycerate kinase family. In terms of assembly, monomer.

It is found in the cytoplasm. The enzyme catalyses (2R)-3-phosphoglycerate + ATP = (2R)-3-phospho-glyceroyl phosphate + ADP. It functions in the pathway carbohydrate degradation; glycolysis; pyruvate from D-glyceraldehyde 3-phosphate: step 2/5. The polypeptide is Phosphoglycerate kinase (Sodalis glossinidius (strain morsitans)).